The chain runs to 187 residues: Ribosome maturation factor RimM (187 aa).

The 74-residue stretch at 96 to 169 (EDEFFYADLE…KLVIDPTAAG (74 aa)) folds into the PRC barrel domain.

Belongs to the RimM family. As to quaternary structure, binds ribosomal protein uS19.

The protein resides in the cytoplasm. An accessory protein needed during the final step in the assembly of 30S ribosomal subunit, possibly for assembly of the head region. Essential for efficient processing of 16S rRNA. May be needed both before and after RbfA during the maturation of 16S rRNA. It has affinity for free ribosomal 30S subunits but not for 70S ribosomes. The protein is Ribosome maturation factor RimM of Sinorhizobium medicae (strain WSM419) (Ensifer medicae).